The sequence spans 455 residues: Epoxide hydrolase 1 (455 aa).

The helical; Signal-anchor for type III membrane protein transmembrane segment at 1 to 21 threads the bilayer; that stretch reads MWLEILLTSVLGFAIYWFISR. Topologically, residues 22–455 are cytoplasmic; the sequence is DKEETLPLED…RKFLSVLERQ (434 aa). Asp-226 acts as the Nucleophile in catalysis. Arg-295 is modified (dimethylated arginine). Tyr-374 acts as the Proton donor in catalysis. Residue His-431 is the Proton acceptor of the active site.

This sequence belongs to the peptidase S33 family. In terms of tissue distribution, found in liver.

The protein resides in the microsome membrane. It localises to the endoplasmic reticulum membrane. The enzyme catalyses cis-stilbene oxide + H2O = (1R,2R)-hydrobenzoin. It carries out the reaction 1-(4-methoxyphenyl)-N-methyl-N-[(3-methyloxetan-3-yl)methyl]methanamine + H2O = 2-{[(4-methoxybenzyl)(methyl)amino]methyl}-2-methylpropane-1,3-diol. The catalysed reaction is 8,9-epoxy-(5Z,11Z,14Z)-eicosatrienoate + H2O = 8,9-dihydroxy-(5Z,11Z,14Z)-eicosatrienoate. It catalyses the reaction 11,12-epoxy-(5Z,8Z,14Z)-eicosatrienoate + H2O = 11,12-dihydroxy-(5Z,8Z,14Z)-eicosatrienoate. The enzyme catalyses 2-(5Z,8Z,11Z,14Z-eicosatetraenoyl)-glycerol + H2O = glycerol + (5Z,8Z,11Z,14Z)-eicosatetraenoate + H(+). Its activity is regulated as follows. Inhibited by 10-hydroxystearamide and methoxy-arachidonyl fluorophosphate. Functionally, biotransformation enzyme that catalyzes the hydrolysis of arene and aliphatic epoxides to less reactive and more water soluble dihydrodiols by the trans addition of water. Plays a role in the metabolism of endogenous lipids such as epoxide-containing fatty acids. Metabolizes the abundant endocannabinoid 2-arachidonoylglycerol (2-AG) to free arachidonic acid (AA) and glycerol. Binds 20(S)-hydroxycholesterol (20(S)-OHC). The polypeptide is Epoxide hydrolase 1 (Homo sapiens (Human)).